A 22-amino-acid chain; its full sequence is C-type natriuretic peptide (22 aa).

Cysteine 6 and cysteine 22 form a disulfide bridge.

This sequence belongs to the natriuretic peptide family.

The protein localises to the secreted. Hormone which plays a role in endochondral ossification through regulation of cartilaginous growth plate chondrocytes proliferation and differentiation. May also be vasoactive and natriuretic. Specifically binds and stimulates the cGMP production of the NPR2 receptor. Binds the clearance receptor NPR3. The sequence is that of C-type natriuretic peptide (NPPC) from Gallus gallus (Chicken).